The sequence spans 326 residues: Lipoyl synthase (326 aa).

[4Fe-4S] cluster-binding residues include C56, C61, C67, C82, C86, C89, and S298. In terms of domain architecture, Radical SAM core spans 68 to 287; sequence WEDREATFLI…KDEADAIGYS (220 aa).

Belongs to the radical SAM superfamily. Lipoyl synthase family. [4Fe-4S] cluster serves as cofactor.

The protein localises to the cytoplasm. The catalysed reaction is [[Fe-S] cluster scaffold protein carrying a second [4Fe-4S](2+) cluster] + N(6)-octanoyl-L-lysyl-[protein] + 2 oxidized [2Fe-2S]-[ferredoxin] + 2 S-adenosyl-L-methionine + 4 H(+) = [[Fe-S] cluster scaffold protein] + N(6)-[(R)-dihydrolipoyl]-L-lysyl-[protein] + 4 Fe(3+) + 2 hydrogen sulfide + 2 5'-deoxyadenosine + 2 L-methionine + 2 reduced [2Fe-2S]-[ferredoxin]. Its pathway is protein modification; protein lipoylation via endogenous pathway; protein N(6)-(lipoyl)lysine from octanoyl-[acyl-carrier-protein]: step 2/2. Its function is as follows. Catalyzes the radical-mediated insertion of two sulfur atoms into the C-6 and C-8 positions of the octanoyl moiety bound to the lipoyl domains of lipoate-dependent enzymes, thereby converting the octanoylated domains into lipoylated derivatives. The protein is Lipoyl synthase of Streptomyces griseus subsp. griseus (strain JCM 4626 / CBS 651.72 / NBRC 13350 / KCC S-0626 / ISP 5235).